A 137-amino-acid polypeptide reads, in one-letter code: Ciliary microtubule inner protein 1 (137 aa).

In terms of tissue distribution, expressed in airway epithelial cells, renal tubular cells, pancreatic acinar cells and epithelial cells of the stomach, duodenum, and gallbladder (at protein level).

The protein resides in the cell projection. Its subcellular location is the cilium. The protein is Ciliary microtubule inner protein 1 of Homo sapiens (Human).